The chain runs to 1173 residues: DNA-directed RNA polymerase subunit beta (1173 aa).

Residues 1–23 form a disordered region; the sequence is MEGSLLVASSTSNNETANTASTD. The span at 8 to 22 shows a compositional bias: low complexity; the sequence is ASSTSNNETANTAST.

Belongs to the RNA polymerase beta chain family. As to quaternary structure, the RNAP catalytic core consists of 2 alpha, 1 beta, 1 beta' and 1 omega subunit. When a sigma factor is associated with the core the holoenzyme is formed, which can initiate transcription.

The enzyme catalyses RNA(n) + a ribonucleoside 5'-triphosphate = RNA(n+1) + diphosphate. In terms of biological role, DNA-dependent RNA polymerase catalyzes the transcription of DNA into RNA using the four ribonucleoside triphosphates as substrates. The protein is DNA-directed RNA polymerase subunit beta of Paenarthrobacter aurescens (strain TC1).